The primary structure comprises 322 residues: Putative HTH-type transcriptional regulatory protein rrnAC2519 (322 aa).

Residues 132–189 (LADVREDRDWSLGRLAKELGVSRRTVSKYEDGMDASVEVAAELEDLFDAPLTSPVSVL) enclose the HTH cro/C1-type domain. Positions 143–162 (LGRLAKELGVSRRTVSKYED) form a DNA-binding region, H-T-H motif.

The sequence is that of Putative HTH-type transcriptional regulatory protein rrnAC2519 from Haloarcula marismortui (strain ATCC 43049 / DSM 3752 / JCM 8966 / VKM B-1809) (Halobacterium marismortui).